We begin with the raw amino-acid sequence, 464 residues long: Glycine--tRNA ligase (464 aa).

Positions 104 and 175 each coordinate substrate. Residues 207-209, 217-222, 292-293, and 336-339 contribute to the ATP site; these read RNE, FRTREF, EL, and GVNR. 222–226 is a binding site for substrate; it reads FEQME. 332–336 is a substrate binding site; that stretch reads EPALG.

This sequence belongs to the class-II aminoacyl-tRNA synthetase family. As to quaternary structure, homodimer.

It is found in the cytoplasm. The catalysed reaction is tRNA(Gly) + glycine + ATP = glycyl-tRNA(Gly) + AMP + diphosphate. In terms of biological role, catalyzes the attachment of glycine to tRNA(Gly). The polypeptide is Glycine--tRNA ligase (Leptospira borgpetersenii serovar Hardjo-bovis (strain JB197)).